The chain runs to 151 residues: Putative pre-16S rRNA nuclease (151 aa).

This sequence belongs to the YqgF nuclease family.

It localises to the cytoplasm. Functionally, could be a nuclease involved in processing of the 5'-end of pre-16S rRNA. The chain is Putative pre-16S rRNA nuclease from Bifidobacterium longum subsp. infantis (strain ATCC 15697 / DSM 20088 / JCM 1222 / NCTC 11817 / S12).